The sequence spans 223 residues: Kinetochore protein Spc25 (223 aa).

Residues 51–119 (RHQRKVGKLQ…NEIMERIQTL (69 aa)) are a coiled coil.

Belongs to the SPC25 family. In terms of assembly, component of the Ndc80 complex, which is composed of Ndc80, Nuf2 and Spc25.

The protein localises to the nucleus. Its subcellular location is the chromosome. The protein resides in the centromere. It localises to the kinetochore. In terms of biological role, acts as a component of the essential kinetochore-associated Ndc80 complex, which is required for chromosome segregation and spindle checkpoint activity during meiosis and mitosis. Required for kinetochore integrity and the organization of stable microtubule binding sites in the outer plate of the kinetochore. Participates in SAC signaling that responds specifically to disruptions in spindle microtubule dynamics. The NDC80 complex synergistically enhances the affinity of the SKA1 complex for microtubules and may allow the NDC80 complex to track depolymerizing microtubules. The chain is Kinetochore protein Spc25 from Drosophila teissieri (Fruit fly).